Here is a 687-residue protein sequence, read N- to C-terminus: Putative lipase YDR444W (687 aa).

The active-site Charge relay system is Ser-284. Disordered regions lie at residues 429–472, 491–513, and 650–687; these read IRKK…AESP, KINK…EQGV, and ELAE…ENAT. Over residues 436–463 the composition is skewed to low complexity; it reads SPTSSEFVSSDSPESSGASSPSNENGNN. The segment covering 670–681 has biased composition (basic and acidic residues); that stretch reads RSNEYNEGEISK.

Belongs to the putative lipase ROG1 family.

The protein resides in the cytoplasm. The protein is Putative lipase YDR444W of Saccharomyces cerevisiae (strain ATCC 204508 / S288c) (Baker's yeast).